The following is an 88-amino-acid chain: MSLLSFLLGEKKKTASVAKERLQIILAHERSGRSAGQPDYLPALQRELVAVISKYVKINADDLKVHFERQDDLEVLEVKIELPEATAK.

The protein belongs to the MinE family.

Functionally, prevents the cell division inhibition by proteins MinC and MinD at internal division sites while permitting inhibition at polar sites. This ensures cell division at the proper site by restricting the formation of a division septum at the midpoint of the long axis of the cell. This chain is Cell division topological specificity factor, found in Acidovorax ebreus (strain TPSY) (Diaphorobacter sp. (strain TPSY)).